The following is a 177-amino-acid chain: Mediator of RNA polymerase II transcription subunit 6 (177 aa).

It belongs to the Mediator complex subunit 6 family. In terms of assembly, component of the Mediator complex.

It localises to the nucleus. In terms of biological role, component of the Mediator complex, a coactivator involved in the regulated transcription of nearly all RNA polymerase II-dependent genes. Mediator functions as a bridge to convey information from gene-specific regulatory proteins to the basal RNA polymerase II transcription machinery. Mediator is recruited to promoters by direct interactions with regulatory proteins and serves as a scaffold for the assembly of a functional preinitiation complex with RNA polymerase II and the general transcription factors. The sequence is that of Mediator of RNA polymerase II transcription subunit 6 (MED6) from Encephalitozoon cuniculi (strain GB-M1) (Microsporidian parasite).